The primary structure comprises 490 residues: Betaine aldehyde dehydrogenase (490 aa).

K(+)-binding residues include Thr-26, Ile-27, and Asp-93. 150-152 (GAW) is a binding site for NAD(+). Lys-162 functions as the Charge relay system in the catalytic mechanism. Residue 176-179 (KPSE) coordinates NAD(+). Val-180 contributes to the K(+) binding site. 230–233 (GVAS) is an NAD(+) binding site. Position 246 (Leu-246) interacts with K(+). Glu-252 (proton acceptor) is an active-site residue. The NAD(+) site is built by Gly-254, Cys-286, and Glu-387. Residue Cys-286 is the Nucleophile of the active site. Cys-286 carries the cysteine sulfenic acid (-SOH) modification. K(+) is bound by residues Lys-457 and Gly-460. Residue Glu-464 is the Charge relay system of the active site.

This sequence belongs to the aldehyde dehydrogenase family. Dimer of dimers. The cofactor is K(+).

The enzyme catalyses betaine aldehyde + NAD(+) + H2O = glycine betaine + NADH + 2 H(+). Its pathway is amine and polyamine biosynthesis; betaine biosynthesis via choline pathway; betaine from betaine aldehyde: step 1/1. Involved in the biosynthesis of the osmoprotectant glycine betaine. Catalyzes the irreversible oxidation of betaine aldehyde to the corresponding acid. The polypeptide is Betaine aldehyde dehydrogenase (Escherichia coli O9:H4 (strain HS)).